A 340-amino-acid polypeptide reads, in one-letter code: S-adenosylmethionine:tRNA ribosyltransferase-isomerase (340 aa).

It belongs to the QueA family. In terms of assembly, monomer.

It is found in the cytoplasm. The catalysed reaction is 7-aminomethyl-7-carbaguanosine(34) in tRNA + S-adenosyl-L-methionine = epoxyqueuosine(34) in tRNA + adenine + L-methionine + 2 H(+). It functions in the pathway tRNA modification; tRNA-queuosine biosynthesis. Its function is as follows. Transfers and isomerizes the ribose moiety from AdoMet to the 7-aminomethyl group of 7-deazaguanine (preQ1-tRNA) to give epoxyqueuosine (oQ-tRNA). In Aliarcobacter butzleri (strain RM4018) (Arcobacter butzleri), this protein is S-adenosylmethionine:tRNA ribosyltransferase-isomerase.